A 356-amino-acid polypeptide reads, in one-letter code: Probable dual-specificity RNA methyltransferase RlmN (356 aa).

Glutamate 100 acts as the Proton acceptor in catalysis. The 235-residue stretch at 106 to 340 folds into the Radical SAM core domain; it reads TQQRLTVCLS…VSLRASRGLD (235 aa). Cysteine 113 and cysteine 345 form a disulfide bridge. [4Fe-4S] cluster is bound by residues cysteine 120, cysteine 124, and cysteine 127. Residues 167–168, serine 197, 226–228, and asparagine 302 each bind S-adenosyl-L-methionine; these read GE and SLH. The active-site S-methylcysteine intermediate is the cysteine 345.

This sequence belongs to the radical SAM superfamily. RlmN family. [4Fe-4S] cluster serves as cofactor.

The protein resides in the cytoplasm. The catalysed reaction is adenosine(2503) in 23S rRNA + 2 reduced [2Fe-2S]-[ferredoxin] + 2 S-adenosyl-L-methionine = 2-methyladenosine(2503) in 23S rRNA + 5'-deoxyadenosine + L-methionine + 2 oxidized [2Fe-2S]-[ferredoxin] + S-adenosyl-L-homocysteine. The enzyme catalyses adenosine(37) in tRNA + 2 reduced [2Fe-2S]-[ferredoxin] + 2 S-adenosyl-L-methionine = 2-methyladenosine(37) in tRNA + 5'-deoxyadenosine + L-methionine + 2 oxidized [2Fe-2S]-[ferredoxin] + S-adenosyl-L-homocysteine. In terms of biological role, specifically methylates position 2 of adenine 2503 in 23S rRNA and position 2 of adenine 37 in tRNAs. This Prochlorococcus marinus (strain MIT 9303) protein is Probable dual-specificity RNA methyltransferase RlmN.